A 293-amino-acid polypeptide reads, in one-letter code: NAD kinase (293 aa).

Residue Asp72 is the Proton acceptor of the active site. NAD(+) contacts are provided by residues 72–73 (DG), 146–147 (ND), Arg157, Arg174, Asp176, 187–192 (TAYALS), and Gln247.

It belongs to the NAD kinase family. A divalent metal cation serves as cofactor.

It is found in the cytoplasm. The enzyme catalyses NAD(+) + ATP = ADP + NADP(+) + H(+). Its function is as follows. Involved in the regulation of the intracellular balance of NAD and NADP, and is a key enzyme in the biosynthesis of NADP. Catalyzes specifically the phosphorylation on 2'-hydroxyl of the adenosine moiety of NAD to yield NADP. This Teredinibacter turnerae (strain ATCC 39867 / T7901) protein is NAD kinase.